A 310-amino-acid chain; its full sequence is p-hydroxybenzoic acid efflux pump subunit AaeA (310 aa).

Residues 12–32 (AITVVLVVLAFIAIFRAWSFY) traverse the membrane as a helical segment.

The protein belongs to the membrane fusion protein (MFP) (TC 8.A.1) family.

It is found in the cell inner membrane. Functionally, forms an efflux pump with AaeB. The chain is p-hydroxybenzoic acid efflux pump subunit AaeA from Cronobacter sakazakii (strain ATCC BAA-894) (Enterobacter sakazakii).